A 250-amino-acid chain; its full sequence is Prophage antitermination protein Q homolog QuuQ (250 aa).

Belongs to the phage antitermination Q type 2 family.

Functionally, positively regulate expression of some phage genes. Bacterial host RNA polymerase modified by antitermination proteins transcribes through termination sites that otherwise prevent expression of the regulated genes. This chain is Prophage antitermination protein Q homolog QuuQ (quuQ), found in Escherichia coli (strain K12).